We begin with the raw amino-acid sequence, 1393 residues long: Major capsid protein (1393 aa).

The protein belongs to the herpesviridae major capsid protein family. Homomultimer. Makes the hexons and eleven out of twelve pentons. Interacts with triplex proteins 1/TRX1 and 2/TRX2; adjacent capsomers are linked together in groups of three by triplexes, heterotrimeric complexes composed of one molecule of TRX1 and two molecules of TRX2. Interacts with scaffold protein; this interaction allows efficient MCP transport to the host nucleus. Interacts with capsid vertex component 2/CVC2. Interacts with the small capsomere-interacting protein/SCP.

The protein resides in the virion. It localises to the host nucleus. In terms of biological role, self-assembles to form an icosahedral capsid with a T=16 symmetry, about 200 nm in diameter, and consisting of 150 hexons and 12 pentons (total of 162 capsomers). Hexons form the edges and faces of the capsid and are each composed of six MCP molecules. In contrast, one penton is found at each of the 12 vertices. Eleven of the pentons are MCP pentamers, while the last vertex is occupied by the portal complex. The capsid is surrounded by a layer of proteinaceous material designated the tegument which, in turn, is enclosed in an envelope of host cell-derived lipids containing virus-encoded glycoproteins. The sequence is that of Major capsid protein from Gallus gallus (Chicken).